The following is a 308-amino-acid chain: Tryptophan 2,3-dioxygenase (308 aa).

Positions 1–37 (MKPPGDNAPAGCPFSGARAAQPAHEAPHVPGDAAGET) are disordered. Substrate is bound by residues 77–81 (FIIQH), Tyr-139, and Arg-143. His-266 contributes to the heme binding site. Substrate is bound at residue Thr-280.

Belongs to the tryptophan 2,3-dioxygenase family. As to quaternary structure, homotetramer. It depends on heme as a cofactor.

The enzyme catalyses L-tryptophan + O2 = N-formyl-L-kynurenine. Its pathway is amino-acid degradation; L-tryptophan degradation via kynurenine pathway; L-kynurenine from L-tryptophan: step 1/2. Its function is as follows. Heme-dependent dioxygenase that catalyzes the oxidative cleavage of the L-tryptophan (L-Trp) pyrrole ring and converts L-tryptophan to N-formyl-L-kynurenine. Catalyzes the oxidative cleavage of the indole moiety. The sequence is that of Tryptophan 2,3-dioxygenase from Burkholderia ambifaria (strain MC40-6).